Here is a 341-residue protein sequence, read N- to C-terminus: Holliday junction branch migration complex subunit RuvB (341 aa).

The large ATPase domain (RuvB-L) stretch occupies residues 1–182; sequence MTERFVTPDF…FGVICRLEFY (182 aa). Residues Leu21, Arg22, Gly63, Lys66, Thr67, Thr68, 129-131, Arg172, Tyr182, and Arg219 contribute to the ATP site; that span reads EDY. Thr67 provides a ligand contact to Mg(2+). A small ATPAse domain (RuvB-S) region spans residues 183-253; that stretch reads TDDELATIAG…IADMALSRLE (71 aa). Residues 256 to 341 form a head domain (RuvB-H) region; sequence NCGLDHMDRL…RGKTSGELFS (86 aa). DNA is bound by residues Arg311 and Arg316.

The protein belongs to the RuvB family. As to quaternary structure, homohexamer. Forms an RuvA(8)-RuvB(12)-Holliday junction (HJ) complex. HJ DNA is sandwiched between 2 RuvA tetramers; dsDNA enters through RuvA and exits via RuvB. An RuvB hexamer assembles on each DNA strand where it exits the tetramer. Each RuvB hexamer is contacted by two RuvA subunits (via domain III) on 2 adjacent RuvB subunits; this complex drives branch migration. In the full resolvosome a probable DNA-RuvA(4)-RuvB(12)-RuvC(2) complex forms which resolves the HJ.

The protein resides in the cytoplasm. It carries out the reaction ATP + H2O = ADP + phosphate + H(+). Its function is as follows. The RuvA-RuvB-RuvC complex processes Holliday junction (HJ) DNA during genetic recombination and DNA repair, while the RuvA-RuvB complex plays an important role in the rescue of blocked DNA replication forks via replication fork reversal (RFR). RuvA specifically binds to HJ cruciform DNA, conferring on it an open structure. The RuvB hexamer acts as an ATP-dependent pump, pulling dsDNA into and through the RuvAB complex. RuvB forms 2 homohexamers on either side of HJ DNA bound by 1 or 2 RuvA tetramers; 4 subunits per hexamer contact DNA at a time. Coordinated motions by a converter formed by DNA-disengaged RuvB subunits stimulates ATP hydrolysis and nucleotide exchange. Immobilization of the converter enables RuvB to convert the ATP-contained energy into a lever motion, pulling 2 nucleotides of DNA out of the RuvA tetramer per ATP hydrolyzed, thus driving DNA branch migration. The RuvB motors rotate together with the DNA substrate, which together with the progressing nucleotide cycle form the mechanistic basis for DNA recombination by continuous HJ branch migration. Branch migration allows RuvC to scan DNA until it finds its consensus sequence, where it cleaves and resolves cruciform DNA. The protein is Holliday junction branch migration complex subunit RuvB of Syntrophotalea carbinolica (strain DSM 2380 / NBRC 103641 / GraBd1) (Pelobacter carbinolicus).